We begin with the raw amino-acid sequence, 87 residues long: Small ribosomal subunit protein uS15 (87 aa).

A compositionally biased stretch (basic and acidic residues) spans 1 to 19; it reads MEKARKEQLIREYATHEGD. A disordered region spans residues 1-22; that stretch reads MEKARKEQLIREYATHEGDTGS.

It belongs to the universal ribosomal protein uS15 family. Part of the 30S ribosomal subunit. Forms a bridge to the 50S subunit in the 70S ribosome, contacting the 23S rRNA.

One of the primary rRNA binding proteins, it binds directly to 16S rRNA where it helps nucleate assembly of the platform of the 30S subunit by binding and bridging several RNA helices of the 16S rRNA. Functionally, forms an intersubunit bridge (bridge B4) with the 23S rRNA of the 50S subunit in the ribosome. This is Small ribosomal subunit protein uS15 from Clostridium novyi (strain NT).